An 890-amino-acid polypeptide reads, in one-letter code: Leucine--tRNA ligase (890 aa).

The 'HIGH' region signature appears at 48 to 58 (PYPSGKLHMGH). The 'KMSKS' region signature appears at 645-649 (KMSKS). Lys648 contributes to the ATP binding site.

Belongs to the class-I aminoacyl-tRNA synthetase family.

Its subcellular location is the cytoplasm. The catalysed reaction is tRNA(Leu) + L-leucine + ATP = L-leucyl-tRNA(Leu) + AMP + diphosphate. The chain is Leucine--tRNA ligase from Polynucleobacter asymbioticus (strain DSM 18221 / CIP 109841 / QLW-P1DMWA-1) (Polynucleobacter necessarius subsp. asymbioticus).